We begin with the raw amino-acid sequence, 148 residues long: Large ribosomal subunit protein uL15 (148 aa).

A disordered region spans residues 1-47 (MTKLEDLRPTPGSVKPRKRVGRGIGSGHGKTSGRGHKGQKSRGSGKV). Over residues 31–45 (TSGRGHKGQKSRGSG) the composition is skewed to basic residues.

It belongs to the universal ribosomal protein uL15 family. Part of the 50S ribosomal subunit.

Its function is as follows. Binds to the 23S rRNA. This chain is Large ribosomal subunit protein uL15, found in Pseudothermotoga lettingae (strain ATCC BAA-301 / DSM 14385 / NBRC 107922 / TMO) (Thermotoga lettingae).